The following is a 108-amino-acid chain: Tetrahydromethanopterin S-methyltransferase subunit B (108 aa).

The helical transmembrane segment at 77-99 (FQGMFFGFWVTMAVLVLVTILAV) threads the bilayer.

The protein belongs to the MtrB family. As to quaternary structure, the complex is composed of 8 subunits; MtrA, MtrB, MtrC, MtrD, MtrE, MtrF, MtrG and MtrH.

The protein resides in the cell membrane. It catalyses the reaction 5-methyl-5,6,7,8-tetrahydromethanopterin + coenzyme M + 2 Na(+)(in) = 5,6,7,8-tetrahydromethanopterin + methyl-coenzyme M + 2 Na(+)(out). It participates in one-carbon metabolism; methanogenesis from CO(2); methyl-coenzyme M from 5,10-methylene-5,6,7,8-tetrahydromethanopterin: step 2/2. Part of a complex that catalyzes the formation of methyl-coenzyme M and tetrahydromethanopterin from coenzyme M and methyl-tetrahydromethanopterin. This is an energy-conserving, sodium-ion translocating step. This Methanococcus maripaludis (strain DSM 14266 / JCM 13030 / NBRC 101832 / S2 / LL) protein is Tetrahydromethanopterin S-methyltransferase subunit B.